The chain runs to 86 residues: Conotoxin Ec15a (86 aa).

The first 23 residues, 1–23 (MEKLTILILVATVLLAIQVLGQG), serve as a signal peptide directing secretion. The propeptide occupies 24–49 (EGEKPPKEWVQQYAAKRLWALMKGPR). A Pyrrolidone carboxylic acid modification is found at Gln-50.

The protein belongs to the conotoxin O2 superfamily. Post-translationally, contains 4 disulfide bonds. In terms of tissue distribution, expressed by the venom duct.

The protein localises to the secreted. This Conus emaciatus (False virgin cone) protein is Conotoxin Ec15a.